Here is a 247-residue protein sequence, read N- to C-terminus: ATP synthase subunit a, chloroplastic (247 aa).

The next 5 membrane-spanning stretches (helical) occupy residues 38 to 58 (QVLITSWVVIAILLGSATIAV), 95 to 115 (VPFIGTMFLFIFVSNWSGALL), 134 to 154 (INTTVALALLTSVAYFYAGLT), 199 to 219 (LVVVVLVSLVPLVVPIPVMLL), and 220 to 240 (GLFTSGIQALIFATLAAAYIG).

Belongs to the ATPase A chain family. In terms of assembly, F-type ATPases have 2 components, CF(1) - the catalytic core - and CF(0) - the membrane proton channel. CF(1) has five subunits: alpha(3), beta(3), gamma(1), delta(1), epsilon(1). CF(0) has four main subunits: a, b, b' and c.

It is found in the plastid. Its subcellular location is the chloroplast thylakoid membrane. Functionally, key component of the proton channel; it plays a direct role in the translocation of protons across the membrane. The protein is ATP synthase subunit a, chloroplastic of Solanum lycopersicum (Tomato).